Here is a 73-residue protein sequence, read N- to C-terminus: UPF0057 membrane protein At4g30650 (73 aa).

Helical transmembrane passes span 4–24 (NMEV…GVCL) and 37–57 (LVLT…VIVF).

The protein belongs to the UPF0057 (PMP3) family.

It is found in the membrane. This is UPF0057 membrane protein At4g30650 from Arabidopsis thaliana (Mouse-ear cress).